The following is a 274-amino-acid chain: Bis(5'-nucleosyl)-tetraphosphatase, symmetrical (274 aa).

The protein belongs to the Ap4A hydrolase family.

It carries out the reaction P(1),P(4)-bis(5'-adenosyl) tetraphosphate + H2O = 2 ADP + 2 H(+). In terms of biological role, hydrolyzes diadenosine 5',5'''-P1,P4-tetraphosphate to yield ADP. This is Bis(5'-nucleosyl)-tetraphosphatase, symmetrical from Shewanella putrefaciens (strain CN-32 / ATCC BAA-453).